We begin with the raw amino-acid sequence, 285 residues long: K88 fimbrial protein AB (285 aa).

Positions 1–21 are cleaved as a signal peptide; sequence MKKTLIALAIAASAASGMAHA.

This sequence belongs to the fimbrial K88 protein family. In terms of assembly, K88 fimbria, 0.1-1 micrometer in length and 7 nanometers in diameter, is composed of about 100 identical subunits.

It is found in the fimbrium. K88 major fimbrial subunit. Fimbriae (also called pili), are polar filaments radiating from the surface of the bacterium to a length of 0.5-1.5 micrometers and numbering 100-300 per cell. They enable bacteria to colonize the epithelium of specific host organs. In Escherichia coli, this protein is K88 fimbrial protein AB (faeG).